The primary structure comprises 238 residues: MASSCQNVEIPGKPTETGTALLETATGTIQGFAPLSQIHQHLCAFHFYADDMGRQVEAHHFCAHLNEDVRQCLIFDGPGAGARLIGVEYIVSETVFLTLPDAEKPLWHTHEFEVKGGVLFMPGVPGVVERRDLEKVCKTYGKTIHFWQVDRGDALPLGLPQIMMVLTREGQLRQDLADCVEKKFGVSFQKERENRAYMSGPEHGIHPLANATGKGLRTEIREVDLPASTTAGAGRVFT.

This sequence belongs to the OBAP family. In terms of tissue distribution, expressed in seeds, but not in leaves or roots. Highest expression in scutellum. Detected in embryo axis and endosperm.

It localises to the lipid droplet. The chain is Oil body-associated protein 1A from Zea mays (Maize).